The following is a 170-amino-acid chain: Acireductone dioxygenase (170 aa).

Fe(2+)-binding residues include His-99, His-101, Glu-105, and His-144. Ni(2+)-binding residues include His-99, His-101, Glu-105, and His-144.

Belongs to the acireductone dioxygenase (ARD) family. In terms of assembly, monomer. Fe(2+) serves as cofactor. Requires Ni(2+) as cofactor.

The enzyme catalyses 1,2-dihydroxy-5-(methylsulfanyl)pent-1-en-3-one + O2 = 3-(methylsulfanyl)propanoate + CO + formate + 2 H(+). It catalyses the reaction 1,2-dihydroxy-5-(methylsulfanyl)pent-1-en-3-one + O2 = 4-methylsulfanyl-2-oxobutanoate + formate + 2 H(+). It participates in amino-acid biosynthesis; L-methionine biosynthesis via salvage pathway; L-methionine from S-methyl-5-thio-alpha-D-ribose 1-phosphate: step 5/6. In terms of biological role, catalyzes 2 different reactions between oxygen and the acireductone 1,2-dihydroxy-3-keto-5-methylthiopentene (DHK-MTPene) depending upon the metal bound in the active site. Fe-containing acireductone dioxygenase (Fe-ARD) produces formate and 2-keto-4-methylthiobutyrate (KMTB), the alpha-ketoacid precursor of methionine in the methionine recycle pathway. Ni-containing acireductone dioxygenase (Ni-ARD) produces methylthiopropionate, carbon monoxide and formate, and does not lie on the methionine recycle pathway. The protein is Acireductone dioxygenase of Bacillus anthracis.